The sequence spans 223 residues: Small ribosomal subunit protein uS3 (223 aa).

One can recognise a KH type-2 domain in the interval 39–108 (IRKFVKKKGA…VILINIVEVK (70 aa)).

The protein belongs to the universal ribosomal protein uS3 family. In terms of assembly, part of the 30S ribosomal subunit. Forms a tight complex with proteins S10 and S14.

In terms of biological role, binds the lower part of the 30S subunit head. Binds mRNA in the 70S ribosome, positioning it for translation. This Clostridium kluyveri (strain NBRC 12016) protein is Small ribosomal subunit protein uS3.